A 484-amino-acid chain; its full sequence is MKSSVEQLSPTRVRIKVEVPFAELEPDFQRAYKELAKQVRLPGFRPGRAPVKLLEARFGREAMLDQIVNDAVPSRYGQALAESEIQPLGRPDIEVTQKEYGQDLAFTAEVDVRPEIALPDLTGLSVSVDAIEATDDEVNAELESLRARFGTLTEVERPVATGDFISIDLSAAVDGEDVPNAAAEGLSHEVGSGRLIAGLDDAVVGLSVDESRVFTAKLAAGDHAGRDAEVTVTVKSVKERELPEPDDEFAQLASEFDTIDELRASLREQVLQAKRVGQAEQIRNATIDALLERVDVPTPESYVQAQYEGVLHSALSGINNDEARFNELLVEQGSSRDAFDAEARTASEKDVKRQLLLDALADDLKVQVGQEDLTERLVLTSRQYGIEPQQLFAYLQENNQLPSMFADVRRELAVKAVAQAATVTDTDGNTIDTSEFFGKPPENDVTDLLDDDADGDAGVDADGDTENSAEPADADSADAAQGAG.

Positions 162-243 (GDFISIDLSA…VKSVKERELP (82 aa)) constitute a PPIase FKBP-type domain. Positions 427–484 (DGNTIDTSEFFGKPPENDVTDLLDDDADGDAGVDADGDTENSAEPADADSADAAQGAG) are disordered. The span at 444-476 (DVTDLLDDDADGDAGVDADGDTENSAEPADADS) shows a compositional bias: acidic residues.

This sequence belongs to the FKBP-type PPIase family. Tig subfamily.

Its subcellular location is the cytoplasm. The catalysed reaction is [protein]-peptidylproline (omega=180) = [protein]-peptidylproline (omega=0). In terms of biological role, involved in protein export. Acts as a chaperone by maintaining the newly synthesized protein in an open conformation. Functions as a peptidyl-prolyl cis-trans isomerase. The sequence is that of Trigger factor from Mycobacterium marinum (strain ATCC BAA-535 / M).